A 326-amino-acid chain; its full sequence is MPQKFDLIAIGRAAVDLNAVEYNRPLEDTKTFAKFVGGSPANIAIGSAKLGQKVGFIGKVSDDQLGHYVTQYMASVGIDTSNMVKDDTGHKIGLTFTEIISPEESDILMYRNEAADLYLNAHEVSRAYLAQTKMLVISGTGLAQSPSREAILKALLIAKELGVEVIFELDYRPYTWQNAEETSLYYQLVAQKADVIIGTRDEFDVLENHQGRTDQETIATLFQYDANLIVIKSGIQGSNAYTKAGETYHFGVFKTKVLKSFGAGDSFAAGFLYAYQHQLGLETALKYGSAAASIVISQLSSSEAMPNLDQLTAFIEKAEAQEVHQS.

It belongs to the carbohydrate kinase PfkB family.

The catalysed reaction is 5-dehydro-2-deoxy-D-gluconate + ATP = 6-phospho-5-dehydro-2-deoxy-D-gluconate + ADP + H(+). It functions in the pathway polyol metabolism; myo-inositol degradation into acetyl-CoA; acetyl-CoA from myo-inositol: step 5/7. Its function is as follows. Catalyzes the phosphorylation of 5-dehydro-2-deoxy-D-gluconate (2-deoxy-5-keto-D-gluconate or DKG) to 6-phospho-5-dehydro-2-deoxy-D-gluconate (DKGP). The protein is 5-dehydro-2-deoxygluconokinase of Lacticaseibacillus casei (Lactobacillus casei).